The sequence spans 191 residues: Large ribosomal subunit protein uL5 (191 aa).

It belongs to the universal ribosomal protein uL5 family. Part of the 50S ribosomal subunit; part of the 5S rRNA/L5/L18/L25 subcomplex. Contacts the 5S rRNA and the P site tRNA. Forms a bridge to the 30S subunit in the 70S ribosome.

Functionally, this is one of the proteins that bind and probably mediate the attachment of the 5S RNA into the large ribosomal subunit, where it forms part of the central protuberance. In the 70S ribosome it contacts protein S13 of the 30S subunit (bridge B1b), connecting the 2 subunits; this bridge is implicated in subunit movement. Contacts the P site tRNA; the 5S rRNA and some of its associated proteins might help stabilize positioning of ribosome-bound tRNAs. In Corynebacterium glutamicum (strain R), this protein is Large ribosomal subunit protein uL5.